The primary structure comprises 417 residues: Type II methyltransferase M.KpnI (417 aa).

This sequence belongs to the N(4)/N(6)-methyltransferase family.

It carries out the reaction a 2'-deoxyadenosine in DNA + S-adenosyl-L-methionine = an N(6)-methyl-2'-deoxyadenosine in DNA + S-adenosyl-L-homocysteine + H(+). Functionally, a beta subtype methylase, recognizes the double-stranded sequence 5'-GGTACC-3', methylates A-4 on both strands, and protects the DNA from cleavage by the KpnI endonuclease. The polypeptide is Type II methyltransferase M.KpnI (Klebsiella pneumoniae).